Reading from the N-terminus, the 388-residue chain is UPF0496 protein 1 (388 aa).

The interval 1 to 25 is disordered; it reads MGNSSSSGSHRPPRPASSESALPPA. Residues 198 to 227 adopt a coiled-coil conformation; that stretch reads QAVYRQQLTMLEKLQQRKHRLDKKVRAIKA. Transmembrane regions (helical) follow at residues 234-254 and 257-277; these read IIFA…AAIA and PVAA…GKWI. Residues 344 to 376 are a coiled coil; sequence VEEIKKKLEVFMKSVEDLGEQADRCSRDIRRAR.

It belongs to the UPF0496 family.

Its subcellular location is the membrane. This Oryza sativa subsp. japonica (Rice) protein is UPF0496 protein 1.